Consider the following 191-residue polypeptide: Molybdenum cofactor guanylyltransferase (191 aa).

Residues 11–13 (LCG), K23, D66, and D97 contribute to the GTP site. D97 provides a ligand contact to Mg(2+).

This sequence belongs to the MobA family. As to quaternary structure, monomer. Mg(2+) serves as cofactor.

It localises to the cytoplasm. It catalyses the reaction Mo-molybdopterin + GTP + H(+) = Mo-molybdopterin guanine dinucleotide + diphosphate. In terms of biological role, transfers a GMP moiety from GTP to Mo-molybdopterin (Mo-MPT) cofactor (Moco or molybdenum cofactor) to form Mo-molybdopterin guanine dinucleotide (Mo-MGD) cofactor. This is Molybdenum cofactor guanylyltransferase from Campylobacter jejuni subsp. jejuni serotype O:6 (strain 81116 / NCTC 11828).